A 968-amino-acid polypeptide reads, in one-letter code: RNA polymerase-associated protein RapA (968 aa).

Positions 164-334 (DVGRRHAPRV…FARLRLLDPN (171 aa)) constitute a Helicase ATP-binding domain. 177-184 (DEVGLGKT) provides a ligand contact to ATP. Residues 280–283 (DEAH) carry the DEAH box motif. The Helicase C-terminal domain maps to 490-685 (RVEWLMGYLT…ALKAQLEQGR (196 aa)).

This sequence belongs to the SNF2/RAD54 helicase family. RapA subfamily. Interacts with the RNAP. Has a higher affinity for the core RNAP than for the holoenzyme. Its ATPase activity is stimulated by binding to RNAP.

Transcription regulator that activates transcription by stimulating RNA polymerase (RNAP) recycling in case of stress conditions such as supercoiled DNA or high salt concentrations. Probably acts by releasing the RNAP, when it is trapped or immobilized on tightly supercoiled DNA. Does not activate transcription on linear DNA. Probably not involved in DNA repair. This Salmonella schwarzengrund (strain CVM19633) protein is RNA polymerase-associated protein RapA.